The chain runs to 188 residues: Translation initiation factor IF-3 (188 aa).

It belongs to the IF-3 family. As to quaternary structure, monomer.

It localises to the cytoplasm. Functionally, IF-3 binds to the 30S ribosomal subunit and shifts the equilibrium between 70S ribosomes and their 50S and 30S subunits in favor of the free subunits, thus enhancing the availability of 30S subunits on which protein synthesis initiation begins. This Fusobacterium nucleatum subsp. nucleatum (strain ATCC 25586 / DSM 15643 / BCRC 10681 / CIP 101130 / JCM 8532 / KCTC 2640 / LMG 13131 / VPI 4355) protein is Translation initiation factor IF-3.